The chain runs to 947 residues: Valine--tRNA ligase (947 aa).

A 'HIGH' region motif is present at residues proline 45–histidine 55. A 'KMSKS' region motif is present at residues lysine 591–serine 595. Lysine 594 lines the ATP pocket.

This sequence belongs to the class-I aminoacyl-tRNA synthetase family. ValS type 1 subfamily. Monomer.

Its subcellular location is the cytoplasm. The enzyme catalyses tRNA(Val) + L-valine + ATP = L-valyl-tRNA(Val) + AMP + diphosphate. Functionally, catalyzes the attachment of valine to tRNA(Val). As ValRS can inadvertently accommodate and process structurally similar amino acids such as threonine, to avoid such errors, it has a 'posttransfer' editing activity that hydrolyzes mischarged Thr-tRNA(Val) in a tRNA-dependent manner. This is Valine--tRNA ligase from Rhizobium meliloti (strain 1021) (Ensifer meliloti).